The primary structure comprises 123 residues: Small ribosomal subunit protein uS12 (123 aa).

At Asp-89 the chain carries 3-methylthioaspartic acid.

It belongs to the universal ribosomal protein uS12 family. Part of the 30S ribosomal subunit. Contacts proteins S8 and S17. May interact with IF1 in the 30S initiation complex.

Its function is as follows. With S4 and S5 plays an important role in translational accuracy. Functionally, interacts with and stabilizes bases of the 16S rRNA that are involved in tRNA selection in the A site and with the mRNA backbone. Located at the interface of the 30S and 50S subunits, it traverses the body of the 30S subunit contacting proteins on the other side and probably holding the rRNA structure together. The combined cluster of proteins S8, S12 and S17 appears to hold together the shoulder and platform of the 30S subunit. The protein is Small ribosomal subunit protein uS12 of Rhizobium meliloti (strain 1021) (Ensifer meliloti).